The following is an 891-amino-acid chain: DNA mismatch repair protein MutS (891 aa).

Gly-634–Ser-641 is an ATP binding site.

It belongs to the DNA mismatch repair MutS family.

Its function is as follows. This protein is involved in the repair of mismatches in DNA. It is possible that it carries out the mismatch recognition step. This protein has a weak ATPase activity. The polypeptide is DNA mismatch repair protein MutS (Burkholderia pseudomallei (strain 668)).